The primary structure comprises 303 residues: Ribosomal protein uL3 glutamine methyltransferase (303 aa).

The protein belongs to the protein N5-glutamine methyltransferase family. PrmB subfamily.

The enzyme catalyses L-glutaminyl-[ribosomal protein uL3] + S-adenosyl-L-methionine = N(5)-methyl-L-glutaminyl-[ribosomal protein uL3] + S-adenosyl-L-homocysteine + H(+). Methylates large ribosomal subunit protein uL3 on a specific glutamine residue. The sequence is that of Ribosomal protein uL3 glutamine methyltransferase from Neisseria meningitidis serogroup A / serotype 4A (strain DSM 15465 / Z2491).